Here is a 97-residue protein sequence, read N- to C-terminus: Large ribosomal subunit protein eL21 (97 aa).

Residues 1 to 24 (MVQKAHSFRRKTRKKLRKHPRRRG) are compositionally biased toward basic residues. The interval 1–25 (MVQKAHSFRRKTRKKLRKHPRRRGL) is disordered.

Belongs to the eukaryotic ribosomal protein eL21 family.

The sequence is that of Large ribosomal subunit protein eL21 (rpl21e) from Pyrococcus abyssi (strain GE5 / Orsay).